The sequence spans 448 residues: GTPase Der (448 aa).

2 consecutive EngA-type G domains span residues 2-171 (FTVV…PDTQ) and 181-364 (PKIA…EEYS). Residues 8 to 15 (GRPNVGKS), 58 to 62 (DTGGF), 123 to 126 (NKID), 187 to 194 (GRPNVGKS), 234 to 238 (DTAGI), and 305 to 308 (NKWD) contribute to the GTP site. In terms of domain architecture, KH-like spans 365 to 448 (KRVSTSELNR…PINIKIKQRK (84 aa)).

The protein belongs to the TRAFAC class TrmE-Era-EngA-EngB-Septin-like GTPase superfamily. EngA (Der) GTPase family. As to quaternary structure, associates with the 50S ribosomal subunit.

GTPase that plays an essential role in the late steps of ribosome biogenesis. The polypeptide is GTPase Der (Thermodesulfovibrio yellowstonii (strain ATCC 51303 / DSM 11347 / YP87)).